Reading from the N-terminus, the 535-residue chain is RAN GTPase-activating protein 1 (535 aa).

The interval 1–115 (MDHSAKTTQN…EESEVEVSKD (115 aa)) is WPP. 9 LRR repeats span residues 208 to 231 (GSKL…AFAS), 236 to 259 (QHDL…AVRE), 264 to 287 (TDKI…AIAE), 320 to 343 (CSHL…ALAK), 353 to 376 (EIYM…LLKS), 377 to 400 (APSL…NLAA), 405 to 428 (KQSL…LIAK), 433 to 456 (HDQL…ALAQ), and 461 to 488 (KNTF…MFKD). Residues 493-535 (LVPLDDNDPEGEDFEDEDEEEEGEDGNELESKLGSLKIKQGEE) are disordered. Acidic residues predominate over residues 497–520 (DDNDPEGEDFEDEDEEEEGEDGNE).

Belongs to the RNA1 family. In terms of assembly, homodimer. Interacts with WIP1 through its WPP domain. Component of Ran complexes at least composed of WIT1 or WIT2, RANGAP1 or RANGAP2, and WIP1 or WIP2 or WIP3. Interacts directly with WIT1, WIP2 and WIP3. Interacts with POK1.

Its subcellular location is the cytoplasm. It is found in the nucleus envelope. The protein localises to the nucleus membrane. The protein resides in the cytoskeleton. It localises to the spindle. Its subcellular location is the phragmoplast. In terms of biological role, GTPase activator for the nuclear Ras-related regulatory protein Ran, converting it to the putatively inactive GDP-bound state. Plays a role in spatial signaling during cell division. In Arabidopsis thaliana (Mouse-ear cress), this protein is RAN GTPase-activating protein 1 (RANGAP1).